The primary structure comprises 744 residues: Endonuclease MutS2 (744 aa).

ATP is bound at residue 315-322; sequence GPNMGGKT. In terms of domain architecture, Smr spans 668-743; sequence VDLRGLTVAE…GHGVTVVALR (76 aa).

The protein belongs to the DNA mismatch repair MutS family. MutS2 subfamily. Homodimer. Interacts with MutL. Binds to stalled ribosomes, contacting rRNA.

Nuclease activity is stimulated by interaction with MutL. ATPase activity is stimulated by dsDNA. Endonuclease that is involved in the suppression of homologous recombination and may thus have a key role in the control of bacterial genetic diversity. Cleaves the phosphate backbone of oligodeoxynucleotides non-sequence-specifically at the 3' side of the phosphates. Preferably incises the branched DNA structures, especially the D-loop structure over the Holliday junction. Has ATPase activity. Binds to dsDNA but not to ssDNA. In terms of biological role, acts as a ribosome collision sensor, splitting the ribosome into its 2 subunits. Detects stalled/collided 70S ribosomes which it binds and splits by an ATP-hydrolysis driven conformational change. Acts upstream of the ribosome quality control system (RQC), a ribosome-associated complex that mediates the extraction of incompletely synthesized nascent chains from stalled ribosomes and their subsequent degradation. Probably generates substrates for RQC. The sequence is that of Endonuclease MutS2 from Thermus thermophilus (strain ATCC 27634 / DSM 579 / HB8).